The sequence spans 1044 residues: Elongation factor 3 (1044 aa).

One copy of the HEAT 1 repeat lies at 5–42 (AQSIKVLGELFEKLSVATAENREATATEIASFLNGNII). Residues I42 and H44 each coordinate ADP. The HEAT 2 repeat unit spans residues 45-80 (DVPEEFFKNLTKAVKDKKTAAAALETIAHIANENNL). Residue S83 coordinates ADP. 6 HEAT repeats span residues 86–123 (PYIV…AIDP), 124–162 (VAIK…AAKT), 166–203 (LRMP…TVDN), 205–241 (DIER…EVTP), 242–279 (ATLS…LVED), and 285–323 (PFLE…VGNV). The ADP site is built by T392, H396, and E397. ABC transporter domains lie at 426–641 (DEGE…YYEL) and 667–993 (VKVS…KKED). ADP contacts are provided by N703, E922, N925, and H951. The segment at 975-1044 (GHNWVSGQGS…DAYVSSDDEF (70 aa)) is disordered. Residues 987–999 (RLEKKEDEGDKFD) are compositionally biased toward basic and acidic residues. Residues 1009 to 1031 (NKKKKLSSAELRKKKKERMKKKK) show a composition bias toward basic residues.

This sequence belongs to the ABC transporter superfamily. ABCF family. EF3 subfamily. Monomer.

Its subcellular location is the cytoplasm. It catalyses the reaction ATP + H2O = ADP + phosphate + H(+). It functions in the pathway protein biosynthesis; polypeptide chain elongation. In terms of biological role, ribosome-dependent ATPase that functions in cytoplasmic translation elongation. Required for the ATP-dependent release of deacylated tRNA from the ribosomal E-site during protein biosynthesis. Stimulates the eEF1A-dependent binding of aminoacyl-tRNA to the ribosomal A-site, which has reduced affinity for tRNA as long as the E-site is occupied. Assists translation termination by stimulating the release of nascent protein from the ribosome by release factors. The sequence is that of Elongation factor 3 (TEF3) from Eremothecium gossypii (strain ATCC 10895 / CBS 109.51 / FGSC 9923 / NRRL Y-1056) (Yeast).